Reading from the N-terminus, the 296-residue chain is Fructose-bisphosphate aldolase class 1 (296 aa).

Catalysis depends on E175, which acts as the Proton acceptor. Catalysis depends on K212, which acts as the Schiff-base intermediate with dihydroxyacetone-P.

This sequence belongs to the class I fructose-bisphosphate aldolase family.

It carries out the reaction beta-D-fructose 1,6-bisphosphate = D-glyceraldehyde 3-phosphate + dihydroxyacetone phosphate. It functions in the pathway carbohydrate degradation; glycolysis; D-glyceraldehyde 3-phosphate and glycerone phosphate from D-glucose: step 4/4. The polypeptide is Fructose-bisphosphate aldolase class 1 (Staphylococcus aureus (strain bovine RF122 / ET3-1)).